We begin with the raw amino-acid sequence, 253 residues long: MSRRRRVYEGKAKVLYEGPEPGTLIQHFKDDATAFDAQKRATIEGKGVLNNRISEFIFTRLNEIGVPTHFIRALNMREQLIREVEIIPCEVVVRNVAAGSLSKRLGIDEGTVLPRSIIEFYYKNDELHDPMVSEEHITAFGWATPQEIDDMMALALRINDFLTGLFLGIGIRLVDFKVEFGRLYEGEMVRVVLADEISPDCCRLWDTRTNDKMDKDRFRRDMGGLIEAYSEVARRLGILFENEPKRSGPKLVK.

The protein belongs to the SAICAR synthetase family.

The catalysed reaction is 5-amino-1-(5-phospho-D-ribosyl)imidazole-4-carboxylate + L-aspartate + ATP = (2S)-2-[5-amino-1-(5-phospho-beta-D-ribosyl)imidazole-4-carboxamido]succinate + ADP + phosphate + 2 H(+). It participates in purine metabolism; IMP biosynthesis via de novo pathway; 5-amino-1-(5-phospho-D-ribosyl)imidazole-4-carboxamide from 5-amino-1-(5-phospho-D-ribosyl)imidazole-4-carboxylate: step 1/2. This Parvibaculum lavamentivorans (strain DS-1 / DSM 13023 / NCIMB 13966) protein is Phosphoribosylaminoimidazole-succinocarboxamide synthase.